The primary structure comprises 926 residues: Peripheral plasma membrane protein CASK (926 aa).

In terms of domain architecture, Protein kinase spans Y12 to L276. ATP-binding positions include I18–V26 and K41. Position 51 is a phosphoserine (S51). The active site involves D141. S151 and S155 each carry phosphoserine; by autocatalysis. T182 carries the post-translational modification Phosphothreonine. The calmodulin-binding stretch occupies residues K305–H315. S313 bears the Phosphoserine mark. 2 consecutive L27 domains span residues A343–I398 and P402–E455. Residues M482–A909 are required for interaction with NRXN1 (via C-terminal tail). Positions L490–Y571 constitute a PDZ domain. A phosphoserine mark is found at S570 and Y571. Residues Q574 to P610 form a disordered region. Residues G612–V682 enclose the SH3 domain. One can recognise a Guanylate kinase-like domain in the interval R739–E911.

This sequence in the N-terminal section; belongs to the protein kinase superfamily. CAMK Ser/Thr protein kinase family. CaMK subfamily. The protein belongs to the MAGUK family. As to quaternary structure, CASK and LIN7 form a tripartite complex with CASKIN1. Component of the brain-specific heterotrimeric complex (LIN-10-LIN-2-LIN-7 complex) composed of at least APBA1, CASK, and LIN7, which associates with the motor protein KIF17 to transport vesicles along microtubules. Forms a heterotrimeric complex with DLG1 and LIN7B via their L27 domains. Identified in a complex with ACTN4, IQGAP1, MAGI2, NPHS1, SPTAN1 and SPTBN1. Part of a complex containing CASK, TBR1 and TSPYL2. Interacts with WHRN. Interacts (via the PDZ, SH3 and guanylate kinase-like domains) with NRXN1 (via C-terminus). Interacts with CASKIN1, APBA1, LIN7(A/B/C), and L27 domain of DLG1 and isoform 2 of DLG4. Interacts with FCHSD2. Interacts with KIRREL3. Interacts with TBR1. Interacts with TSPYL2. It depends on Unlike other protein kinases, does not require a divalent cation such as magnesium for catalytic activity. as a cofactor.

The protein localises to the nucleus. It is found in the cytoplasm. It localises to the cell membrane. It catalyses the reaction L-seryl-[protein] + ATP = O-phospho-L-seryl-[protein] + ADP + H(+). The enzyme catalyses L-threonyl-[protein] + ATP = O-phospho-L-threonyl-[protein] + ADP + H(+). With respect to regulation, differs from archetypal CaMK members in that the kinase domain exhibits a constitutively active conformation and the autoinhibitory region does not engage in direct contact with the ATP-binding cleft, although it still binds Ca(2+)/CAM. In terms of biological role, multidomain scaffolding Mg(2+)-independent protein kinase that catalyzes the phosphotransfer from ATP to proteins such as NRXN1, and plays a role in synaptic transmembrane protein anchoring and ion channel trafficking. Contributes to neural development and regulation of gene expression via interaction with the transcription factor TBR1. Binds to cell-surface proteins, including amyloid precursor protein, neurexins, and syndecans. May mediate a link between the extracellular matrix and the actin cytoskeleton via its interaction with syndecan and with the actin/spectrin-binding protein 4.1. Component of the LIN-10-LIN-2-LIN-7 complex, which associates with the motor protein KIF17 to transport vesicles containing N-methyl-D-aspartate (NMDA) receptor subunit NR2B along microtubules. This is Peripheral plasma membrane protein CASK from Mus musculus (Mouse).